The following is a 279-amino-acid chain: tRNA pseudouridine synthase B (279 aa).

Asp38 functions as the Nucleophile in the catalytic mechanism.

This sequence belongs to the pseudouridine synthase TruB family. Type 1 subfamily.

It catalyses the reaction uridine(55) in tRNA = pseudouridine(55) in tRNA. In terms of biological role, responsible for synthesis of pseudouridine from uracil-55 in the psi GC loop of transfer RNAs. This Acholeplasma laidlawii (strain PG-8A) protein is tRNA pseudouridine synthase B.